The following is a 157-amino-acid chain: SsrA-binding protein (157 aa).

Belongs to the SmpB family.

The protein localises to the cytoplasm. Required for rescue of stalled ribosomes mediated by trans-translation. Binds to transfer-messenger RNA (tmRNA), required for stable association of tmRNA with ribosomes. tmRNA and SmpB together mimic tRNA shape, replacing the anticodon stem-loop with SmpB. tmRNA is encoded by the ssrA gene; the 2 termini fold to resemble tRNA(Ala) and it encodes a 'tag peptide', a short internal open reading frame. During trans-translation Ala-aminoacylated tmRNA acts like a tRNA, entering the A-site of stalled ribosomes, displacing the stalled mRNA. The ribosome then switches to translate the ORF on the tmRNA; the nascent peptide is terminated with the 'tag peptide' encoded by the tmRNA and targeted for degradation. The ribosome is freed to recommence translation, which seems to be the essential function of trans-translation. This chain is SsrA-binding protein, found in Chlorobium luteolum (strain DSM 273 / BCRC 81028 / 2530) (Pelodictyon luteolum).